The sequence spans 63 residues: Small ribosomal subunit protein eS17 (63 aa).

This sequence belongs to the eukaryotic ribosomal protein eS17 family.

The polypeptide is Small ribosomal subunit protein eS17 (Methanococcus vannielii (strain ATCC 35089 / DSM 1224 / JCM 13029 / OCM 148 / SB)).